A 333-amino-acid chain; its full sequence is MNWIQLAQEVIEGKRISENEALAILNSPDDELLLLLQGAFTIRQTYYGKKVKLNMIMNAKSGFCPENCGYCSQSSISKAPIDAYPMVNKETILEGAKRAHELNVGTYCIVASGRGPTNRDIDHVTEAVREIKDTYGLKICACLGILKPEQAEQLKAAGVDRYNHNVNTSARHHDQITTSHTYEDRVNTVEVVKHSGISPCSGVIVGMKETKEDVVDMAFQLRELDADSIPVNFLHAIDGTPLQGVHELTPIYCLKVLSLFRYVCPTKEIRISGGREVNLKSLQPLGLYAANSIFIGDYLTTAGQEETADHQILKDLGFEVESVEEMKASLQGQ.

The Radical SAM core domain maps to 46-275 (YYGKKVKLNM…TKEIRISGGR (230 aa)). [4Fe-4S] cluster contacts are provided by cysteine 64, cysteine 68, and cysteine 71. Positions 108, 140, 200, and 270 each coordinate [2Fe-2S] cluster.

The protein belongs to the radical SAM superfamily. Biotin synthase family. In terms of assembly, homodimer. [4Fe-4S] cluster is required as a cofactor. It depends on [2Fe-2S] cluster as a cofactor.

The catalysed reaction is (4R,5S)-dethiobiotin + (sulfur carrier)-SH + 2 reduced [2Fe-2S]-[ferredoxin] + 2 S-adenosyl-L-methionine = (sulfur carrier)-H + biotin + 2 5'-deoxyadenosine + 2 L-methionine + 2 oxidized [2Fe-2S]-[ferredoxin]. Its pathway is cofactor biosynthesis; biotin biosynthesis; biotin from 7,8-diaminononanoate: step 2/2. In terms of biological role, catalyzes the conversion of dethiobiotin (DTB) to biotin by the insertion of a sulfur atom into dethiobiotin via a radical-based mechanism. The sequence is that of Biotin synthase from Halalkalibacterium halodurans (strain ATCC BAA-125 / DSM 18197 / FERM 7344 / JCM 9153 / C-125) (Bacillus halodurans).